A 449-amino-acid chain; its full sequence is UDP-N-acetylglucosamine 1-carboxyvinyltransferase (449 aa).

A compositionally biased stretch (basic and acidic residues) spans 1–12 (MQVTVNEHDAVE). Residues 1–30 (MQVTVNEHDAVERVATATPAGNREAHAHGT) form a disordered region. Residue 51 to 52 (KN) coordinates phosphoenolpyruvate. R121 lines the UDP-N-acetyl-alpha-D-glucosamine pocket. The active-site Proton donor is C145. C145 bears the 2-(S-cysteinyl)pyruvic acid O-phosphothioketal mark. Residues 150 to 154 (RPVDQ), D333, and I355 contribute to the UDP-N-acetyl-alpha-D-glucosamine site.

The protein belongs to the EPSP synthase family. MurA subfamily.

The protein localises to the cytoplasm. It carries out the reaction phosphoenolpyruvate + UDP-N-acetyl-alpha-D-glucosamine = UDP-N-acetyl-3-O-(1-carboxyvinyl)-alpha-D-glucosamine + phosphate. It functions in the pathway cell wall biogenesis; peptidoglycan biosynthesis. In terms of biological role, cell wall formation. Adds enolpyruvyl to UDP-N-acetylglucosamine. The polypeptide is UDP-N-acetylglucosamine 1-carboxyvinyltransferase (Burkholderia pseudomallei (strain 1710b)).